A 530-amino-acid polypeptide reads, in one-letter code: Potassium voltage-gated channel subfamily A member 6 (530 aa).

The disordered stretch occupies residues 1–35; the sequence is MRSEKSLTLAAPGEVRGPEGEQQDAGEFQEAEGGG. Ser3 is modified (phosphoserine). Over residues 21–30 the composition is skewed to acidic residues; that stretch reads EQQDAGEFQE. A helical membrane pass occupies residues 172-193; sequence PARGIAIVSVLVILISIVIFCL. The disordered stretch occupies residues 203–239; sequence GRGGSNEGSGTRMSPASRGSHEEEDEDEDSYAFPGSI. Ser222 carries the phosphoserine; by CK2 modification. A helical transmembrane segment spans residues 264–285; sequence FFLVETLCIVWFTFELLVRFSA. Cys286 is lipidated: S-palmitoyl cysteine. Residues 297–317 form a helical membrane-spanning segment; that stretch reads MNIIDLVAIFPYFITLGTELV. The chain crosses the membrane as a helical; Voltage-sensor span at residues 339-359; it reads LAILRVIRLVRVFRIFKLSRH. Residues 361–374 form an S4-S5 linker region; that stretch reads KGLQILGKTLQASM. The helical transmembrane segment at 375–396 threads the bilayer; that stretch reads RELGLLIFFLFIGVILFSSAVY. An intramembrane region (helical) is located at residues 411–422; sequence PDAFWWAVVTMT. The short motif at 423–428 is the Selectivity filter element; the sequence is TVGYGD. Residues 423-430 lie within the membrane without spanning it; the sequence is TVGYGDMY. The chain crosses the membrane as a helical span at residues 438–466; that stretch reads IVGSLCAIAGVLTIALPVPVIVSNFNYFY. The residue at position 512 (Ser512) is a Phosphoserine; by PKA. A PDZ-binding motif is present at residues 527 to 529; sequence LTE. Phosphothreonine; by PKA is present on Thr528.

It belongs to the potassium channel family. A (Shaker) (TC 1.A.1.2) subfamily. Kv1.6/KCNA6 sub-subfamily. As to quaternary structure, homotetramer and heterotetramer of potassium channel proteins. Interacts with KCNAB1 and KCNAB2.

The protein resides in the cell membrane. It carries out the reaction K(+)(in) = K(+)(out). Functionally, voltage-gated potassium channel that mediates transmembrane potassium transport in excitable membranes. Forms tetrameric potassium-selective channels through which potassium ions pass in accordance with their electrochemical gradient. The channel alternates between opened and closed conformations in response to the voltage difference across the membrane. Can form functional homotetrameric channels and heterotetrameric channels that contain variable proportions of KCNA1, KCNA2, KCNA4, KNCA5, KCNA6, and possibly other family members as well; channel properties depend on the type of alpha subunits that are part of the channel. Channel properties are modulated by cytoplasmic beta subunits that regulate the subcellular location of the alpha subunits and promote rapid inactivation. Homotetrameric channels display rapid activation and slow inactivation. This is Potassium voltage-gated channel subfamily A member 6 (Kcna6) from Rattus norvegicus (Rat).